Here is a 468-residue protein sequence, read N- to C-terminus: Methylenetetrahydrofolate--tRNA-(uracil-5-)-methyltransferase TrmFO (468 aa).

Position 13–18 (13–18 (GGGLAG)) interacts with FAD.

Belongs to the MnmG family. TrmFO subfamily. FAD serves as cofactor.

The protein localises to the cytoplasm. It catalyses the reaction uridine(54) in tRNA + (6R)-5,10-methylene-5,6,7,8-tetrahydrofolate + NADH + H(+) = 5-methyluridine(54) in tRNA + (6S)-5,6,7,8-tetrahydrofolate + NAD(+). The enzyme catalyses uridine(54) in tRNA + (6R)-5,10-methylene-5,6,7,8-tetrahydrofolate + NADPH + H(+) = 5-methyluridine(54) in tRNA + (6S)-5,6,7,8-tetrahydrofolate + NADP(+). In terms of biological role, catalyzes the folate-dependent formation of 5-methyl-uridine at position 54 (M-5-U54) in all tRNAs. This is Methylenetetrahydrofolate--tRNA-(uracil-5-)-methyltransferase TrmFO from Bartonella henselae (strain ATCC 49882 / DSM 28221 / CCUG 30454 / Houston 1) (Rochalimaea henselae).